The following is a 131-amino-acid chain: MIQLKTMLNCIDNSGAALVECAMVVGQKRHASIGDRIVVVVQKQRGADSAGMAASSAATKVKRGDIRHAVVVRTKQKVQRRDGSVVRFDDNACVLINKAGDPIGSRINGVVGQELRKKKWSKILSMAPMQA.

It belongs to the universal ribosomal protein uL14 family. Component of the mitochondrial large ribosomal subunit (mt-LSU). Mature N.crassa 74S mitochondrial ribosomes consist of a small (37S) and a large (54S) subunit. The 37S small subunit contains a 16S ribosomal RNA (16S mt-rRNA) and 32 different proteins. The 54S large subunit contains a 23S rRNA (23S mt-rRNA) and 42 different proteins.

It localises to the mitochondrion. Its function is as follows. Component of the mitochondrial ribosome (mitoribosome), a dedicated translation machinery responsible for the synthesis of mitochondrial genome-encoded proteins, including at least some of the essential transmembrane subunits of the mitochondrial respiratory chain. The mitoribosomes are attached to the mitochondrial inner membrane and translation products are cotranslationally integrated into the membrane. The chain is Large ribosomal subunit protein uL14m (mrpl38) from Neurospora crassa (strain ATCC 24698 / 74-OR23-1A / CBS 708.71 / DSM 1257 / FGSC 987).